The following is a 236-amino-acid chain: MLALMDADGNIAWSGEYDEWGNQLNEENPHHLHQPYRLPGQQYDKESGLYYNRNRYYDPLQGRYITQDPIGLEGGWSLYAYPLNPVNGIDPLGLSPADVALIRRKDQLNHQRAWDILSDTYEDMKRLNLGGTDQFFHCMAFCRVSKLNDAGVSRSAKGLGYEKEIRDYGLNLFGMYGRKVKLSHSEMIEDNKKDLAVNDHGLTCPSTTDCSDRCSDYINPEHKKTIKALQDAGYLK.

The protein belongs to the RHS family.

This is an uncharacterized protein from Escherichia coli (strain K12).